The following is a 685-amino-acid chain: DNA-directed RNA polymerase subunit beta' (685 aa).

Cys69, Cys71, Cys87, and Cys90 together coordinate Zn(2+). The Mg(2+) site is built by Asp489, Asp491, and Asp493.

This sequence belongs to the RNA polymerase beta' chain family. RpoC1 subfamily. In terms of assembly, in plastids the minimal PEP RNA polymerase catalytic core is composed of four subunits: alpha, beta, beta', and beta''. When a (nuclear-encoded) sigma factor is associated with the core the holoenzyme is formed, which can initiate transcription. Mg(2+) is required as a cofactor. The cofactor is Zn(2+).

It is found in the plastid. Its subcellular location is the chloroplast. It catalyses the reaction RNA(n) + a ribonucleoside 5'-triphosphate = RNA(n+1) + diphosphate. In terms of biological role, DNA-dependent RNA polymerase catalyzes the transcription of DNA into RNA using the four ribonucleoside triphosphates as substrates. This chain is DNA-directed RNA polymerase subunit beta', found in Gossypium hirsutum (Upland cotton).